A 211-amino-acid polypeptide reads, in one-letter code: Ribosomal RNA small subunit methyltransferase G (211 aa).

S-adenosyl-L-methionine contacts are provided by residues Gly81, Leu86, 132 to 133 (AE), and Arg147.

Belongs to the methyltransferase superfamily. RNA methyltransferase RsmG family.

It is found in the cytoplasm. The enzyme catalyses guanosine(527) in 16S rRNA + S-adenosyl-L-methionine = N(7)-methylguanosine(527) in 16S rRNA + S-adenosyl-L-homocysteine. In terms of biological role, specifically methylates the N7 position of guanine in position 527 of 16S rRNA. The chain is Ribosomal RNA small subunit methyltransferase G from Dichelobacter nodosus (strain VCS1703A).